Here is a 1025-residue protein sequence, read N- to C-terminus: Kinesin-like protein KIN-14P (1025 aa).

Disordered regions lie at residues 1-87 and 263-286; these read MNPM…MHHG and YSQI…NEEE. Positions 15 to 28 are enriched in low complexity; it reads STPRSPFSPFSPLS. Over residues 29–41 the composition is skewed to basic and acidic residues; sequence VDDRHRNHADTKT. Positions 42–53 are enriched in low complexity; the sequence is PRSPFSPFSPLS. Residues 65 to 75 show a composition bias toward polar residues; sequence KFQQALASSGQ. Residues 203-425 adopt a coiled-coil conformation; the sequence is HEIATQQLRQ…REMEKKSESN (223 aa). Residues 270–286 show a composition bias toward basic and acidic residues; sequence TKTEKSKWEEQKKNEEE. A Kinesin motor domain is found at 509–838; sequence NIRVFCRVRP…LKFAERVSGV (330 aa). 593 to 600 is a binding site for ATP; sequence GQTGSGKT. The stretch at 847–879 forms a coiled coil; that stretch reads KEGKDVRDLMEQLASLKDTIARKDEEIERLQHQ. 3 disordered regions span residues 881 to 926, 939 to 977, and 994 to 1025; these read QRLQ…SAEA, AASM…RPLD, and TGLT…KRWA. Polar residues-rich tracts occupy residues 901-913 and 939-948; these read SDTG…SRYS and AASMGTQGSI. A compositionally biased stretch (basic and acidic residues) spans 950–962; the sequence is VTKRPPRISDRAK. Low complexity-rich tracts occupy residues 963–974 and 998–1016; these read SVTAKSSTSVTR and SSSK…STSS.

This sequence belongs to the TRAFAC class myosin-kinesin ATPase superfamily. Kinesin family. KIN-14 subfamily.

This chain is Kinesin-like protein KIN-14P, found in Arabidopsis thaliana (Mouse-ear cress).